The following is a 275-amino-acid chain: Ribosomal RNA small subunit methyltransferase A (275 aa).

S-adenosyl-L-methionine is bound by residues N21, L23, G48, E69, D94, and N115.

It belongs to the class I-like SAM-binding methyltransferase superfamily. rRNA adenine N(6)-methyltransferase family. RsmA subfamily.

The protein localises to the cytoplasm. The catalysed reaction is adenosine(1518)/adenosine(1519) in 16S rRNA + 4 S-adenosyl-L-methionine = N(6)-dimethyladenosine(1518)/N(6)-dimethyladenosine(1519) in 16S rRNA + 4 S-adenosyl-L-homocysteine + 4 H(+). Functionally, specifically dimethylates two adjacent adenosines (A1518 and A1519) in the loop of a conserved hairpin near the 3'-end of 16S rRNA in the 30S particle. May play a critical role in biogenesis of 30S subunits. In Clostridium botulinum (strain ATCC 19397 / Type A), this protein is Ribosomal RNA small subunit methyltransferase A.